The following is a 337-amino-acid chain: Heat-inducible transcription repressor HrcA (337 aa).

It belongs to the HrcA family.

In terms of biological role, negative regulator of class I heat shock genes (grpE-dnaK-dnaJ and groELS operons). Prevents heat-shock induction of these operons. This is Heat-inducible transcription repressor HrcA from Nocardioides sp. (strain ATCC BAA-499 / JS614).